The following is a 515-amino-acid chain: Fatty acyl-CoA reductase 2 (515 aa).

Residues 1–464 (MSTIAAFYGG…KAKQRLKRLR (464 aa)) lie on the Cytoplasmic side of the membrane. A helical membrane pass occupies residues 465–484 (NIHYLFNTALFLIAWRLLIA). At 485-515 (RSQMARNVWFFIVSFCYKFLSYFRASSTLKV) the chain is on the peroxisomal side.

The protein belongs to the fatty acyl-CoA reductase family.

It localises to the peroxisome membrane. It catalyses the reaction a long-chain fatty acyl-CoA + 2 NADPH + 2 H(+) = a long-chain primary fatty alcohol + 2 NADP(+) + CoA. It carries out the reaction a very long-chain fatty acyl-CoA + 2 NADPH + 2 H(+) = a very long-chain primary fatty alcohol + 2 NADP(+) + CoA. The catalysed reaction is an ultra-long-chain fatty acyl-CoA + 2 NADPH + 2 H(+) = an ultra long-chain primary fatty alcohol + 2 NADP(+) + CoA. The enzyme catalyses hexadecanoyl-CoA + 2 NADPH + 2 H(+) = hexadecan-1-ol + 2 NADP(+) + CoA. It catalyses the reaction octadecanoyl-CoA + 2 NADPH + 2 H(+) = octadecan-1-ol + 2 NADP(+) + CoA. It carries out the reaction eicosanoyl-CoA + 2 NADPH + 2 H(+) = eicosan-1-ol + 2 NADP(+) + CoA. The catalysed reaction is docosanoyl-CoA + 2 NADPH + 2 H(+) = docosan-1-ol + 2 NADP(+) + CoA. The enzyme catalyses tetracosanoyl-CoA + 2 NADPH + 2 H(+) = tetracosan-1-ol + 2 NADP(+) + CoA. It catalyses the reaction hexacosanoyl-CoA + 2 NADPH + 2 H(+) = hexacosan-1-ol + 2 NADP(+) + CoA. It carries out the reaction octacosanoyl-CoA + 2 NADPH + 2 H(+) = octacosan-1-ol + 2 NADP(+) + CoA. The catalysed reaction is triacontanoyl-CoA + 2 NADPH + 2 H(+) = triacontan-1-ol + 2 NADP(+) + CoA. The enzyme catalyses 18-methylnonadecanoyl-CoA + 2 NADPH + 2 H(+) = 18-methylnonadecan-1-ol + 2 NADP(+) + CoA. It catalyses the reaction 20-methylheneicosanoyl-CoA + 2 NADPH + 2 H(+) = 20-methylheneicosan-1-ol + 2 NADP(+) + CoA. It carries out the reaction 22-methyltricosanoyl-CoA + 2 NADPH + 2 H(+) = 22-methyltricosan-1-ol + 2 NADP(+) + CoA. The catalysed reaction is 24-methylpentacosanoyl-CoA + 2 NADPH + 2 H(+) = 24-methylpentacosan-1-ol + 2 NADP(+) + CoA. Catalyzes the reduction of saturated but not unsaturated C16 or C18 fatty acyl-CoA to fatty alcohols (FAls). A lower activity can be observed with shorter fatty acyl-CoA substrates. Can produce very long-chain and ultra long-chain FAls, regardless of whether they have a straight or branched chain. Involved in the production of ether lipids/plasmalogens and wax monoesters whose synthesis requires FAls as substrates. The sequence is that of Fatty acyl-CoA reductase 2 from Homo sapiens (Human).